The chain runs to 445 residues: Ribosomal protein uS12 methylthiotransferase RimO (445 aa).

Residues 11-121 (PKISFVSLGC…VLDAVHRASP (111 aa)) enclose the MTTase N-terminal domain. [4Fe-4S] cluster contacts are provided by C20, C56, C85, C152, C156, and C159. A Radical SAM core domain is found at 138-375 (LTPRHYAYLK…MARQQKISAR (238 aa)). The 67-residue stretch at 378–444 (KRKVGTRQQI…EYDLHGTVAG (67 aa)) folds into the TRAM domain.

Belongs to the methylthiotransferase family. RimO subfamily. [4Fe-4S] cluster serves as cofactor.

The protein localises to the cytoplasm. It catalyses the reaction L-aspartate(89)-[ribosomal protein uS12]-hydrogen + (sulfur carrier)-SH + AH2 + 2 S-adenosyl-L-methionine = 3-methylsulfanyl-L-aspartate(89)-[ribosomal protein uS12]-hydrogen + (sulfur carrier)-H + 5'-deoxyadenosine + L-methionine + A + S-adenosyl-L-homocysteine + 2 H(+). Catalyzes the methylthiolation of an aspartic acid residue of ribosomal protein uS12. This chain is Ribosomal protein uS12 methylthiotransferase RimO, found in Bradyrhizobium sp. (strain ORS 278).